A 149-amino-acid polypeptide reads, in one-letter code: Large ribosomal subunit protein bL9 (149 aa).

It belongs to the bacterial ribosomal protein bL9 family.

In terms of biological role, binds to the 23S rRNA. This Pasteurella multocida (strain Pm70) protein is Large ribosomal subunit protein bL9.